A 260-amino-acid polypeptide reads, in one-letter code: MARTIDLNADLGESFGPWRMGQDETLLELVTSANIACGFHAGDPDVMAETVRLAVSRGVALGAHPSLPDRQGFGRRPMALRPDEIRNLVLYQIGALAGFARAAGGRLVHVKPHGALYGQAASDAAMAEAIAAAVRAFDANLILVGPAGSQLVRAGQAAGLAIAREGFADRRYEPDGTLTPRGRPEALIEEPAEAVAQALGMVERGEVTARDGTVIPMPVDTLCLHGDGPDAAAFARRLRMELAARGIPVAALGGWLSGAA.

This sequence belongs to the LamB/PxpA family. As to quaternary structure, forms a complex composed of PxpA, PxpB and PxpC.

It carries out the reaction 5-oxo-L-proline + ATP + 2 H2O = L-glutamate + ADP + phosphate + H(+). Functionally, catalyzes the cleavage of 5-oxoproline to form L-glutamate coupled to the hydrolysis of ATP to ADP and inorganic phosphate. The chain is 5-oxoprolinase subunit A from Methylococcus capsulatus (strain ATCC 33009 / NCIMB 11132 / Bath).